A 186-amino-acid chain; its full sequence is Putative CTD phosphatase-like protein 355R (186 aa).

The FCP1 homology domain occupies Glu2–Leu182.

It belongs to the IIV-6 355R family.

In terms of biological role, may function as a phosphatase. In Aedes vexans (Inland floodwater mosquito), this protein is Putative CTD phosphatase-like protein 355R.